The sequence spans 260 residues: Large ribosomal subunit protein uL30 (260 aa).

M1 is subject to N-acetylmethionine. A run of 5 repeats spans residues 7-18 (KKKKVAAALGTL), 19-30 (KKKKVPAVPETL), 31-42 (KKKRRNFAELKV), 43-54 (KRLRKKFALKTL), and 55-66 (RKARRKLIYEKA). The interval 7–66 (KKKKVAAALGTLKKKKVPAVPETLKKKRRNFAELKVKRLRKKFALKTLRKARRKLIYEKA) is 5 X 12 AA tandem repeats. T29 carries the phosphothreonine modification. Residue K136 is modified to N6-acetyllysine. N6-succinyllysine is present on K139. A Phosphotyrosine modification is found at Y151.

This sequence belongs to the universal ribosomal protein uL30 family. As to quaternary structure, component of the large ribosomal subunit. Homodimer. Interacts with DHX33.

The protein localises to the cytoplasm. Functionally, component of the large ribosomal subunit. The ribosome is a large ribonucleoprotein complex responsible for the synthesis of proteins in the cell. Binds to G-rich structures in 28S rRNA and in mRNAs. Plays a regulatory role in the translation apparatus; inhibits cell-free translation of mRNAs. This chain is Large ribosomal subunit protein uL30 (Rpl7), found in Rattus norvegicus (Rat).